The sequence spans 304 residues: Putative integrase/recombinase HI_1414 (304 aa).

The 80-residue stretch at 30–109 folds into the Core-binding (CB) domain; it reads TLFSDVIKRY…TIGHIFKIAL (80 aa). The region spanning 131–304 is the Tyr recombinase domain; sequence PRTQRVTEEN…DMAEVAELLD (174 aa). Residues Arg174, Lys199, His256, Arg259, and His281 contribute to the active site. The active-site O-(3'-phospho-DNA)-tyrosine intermediate is the Tyr291.

The protein belongs to the 'phage' integrase family.

The sequence is that of Putative integrase/recombinase HI_1414 from Haemophilus influenzae (strain ATCC 51907 / DSM 11121 / KW20 / Rd).